The following is a 161-amino-acid chain: Cysteine dioxygenase (161 aa).

Fe cation is bound by residues His75, His77, and His125.

It belongs to the cysteine dioxygenase family. The cofactor is Fe cation.

The catalysed reaction is L-cysteine + O2 = 3-sulfino-L-alanine + H(+). The protein is Cysteine dioxygenase (cdoA) of Bacillus subtilis (strain 168).